The chain runs to 148 residues: Ergosterol biosynthetic protein 28 (148 aa).

Residues 1–25 (MFSLQDVITTTKTTLAAMPKGYLPK) lie on the Cytoplasmic side of the membrane. The chain crosses the membrane as a helical span at residues 26-46 (WLLFISIVSVFNSIQTYVSGL). The Lumenal segment spans residues 47 to 92 (ELTRKVYERKPTETTHLSARTFGTWTFISCVIRFYGAMYLNEPHIF). The helical transmembrane segment at 93 to 113 (ELVFMSYMVALFHFGSELLIF) threads the bilayer. At 114 to 120 (RTCKLGK) the chain is on the cytoplasmic side. Residues 121 to 136 (GFMGPLVVSTTSLVWM) traverse the membrane as a helical segment. Over 137–148 (YKQREYYTGVAW) the chain is Lumenal.

It belongs to the ERG28 family. Heterotetramer of ERG25, ERG26, ERG27 and ERG28. ERG28 acts as a scaffold to tether ERG27 and other 4,4-demethylation-related enzymes, forming a demethylation enzyme complex, in the endoplasmic reticulum. Interacts with ERG25, ERG26 and ERG27. Also interacts with ERG1, ERG3, ERG5, ERG6 and ERG11.

The protein localises to the endoplasmic reticulum membrane. Part of the third module of ergosterol biosynthesis pathway that includes the late steps of the pathway. ERG28 has a role as a scaffold to help anchor the catalytic components of the C-4 demethylation complex ERG25, ERG26 and ERG27 to the endoplasmic reticulum. The third module or late pathway involves the ergosterol synthesis itself through consecutive reactions that mainly occur in the endoplasmic reticulum (ER) membrane. Firstly, the squalene synthase ERG9 catalyzes the condensation of 2 farnesyl pyrophosphate moieties to form squalene, which is the precursor of all steroids. Squalene synthase is crucial for balancing the incorporation of farnesyl diphosphate (FPP) into sterol and nonsterol isoprene synthesis. Secondly, the squalene epoxidase ERG1 catalyzes the stereospecific oxidation of squalene to (S)-2,3-epoxysqualene, which is considered to be a rate-limiting enzyme in steroid biosynthesis. Then, the lanosterol synthase ERG7 catalyzes the cyclization of (S)-2,3 oxidosqualene to lanosterol, a reaction that forms the sterol core. In the next steps, lanosterol is transformed to zymosterol through a complex process involving various demethylation, reduction and desaturation reactions. The lanosterol 14-alpha-demethylase ERG11 (also known as CYP51) catalyzes C14-demethylation of lanosterol to produce 4,4'-dimethyl cholesta-8,14,24-triene-3-beta-ol, which is critical for ergosterol biosynthesis. The C-14 reductase ERG24 reduces the C14=C15 double bond of 4,4-dimethyl-cholesta-8,14,24-trienol to produce 4,4-dimethyl-cholesta-8,24-dienol. 4,4-dimethyl-cholesta-8,24-dienol is substrate of the C-4 demethylation complex ERG25-ERG26-ERG27 in which ERG25 catalyzes the three-step monooxygenation required for the demethylation of 4,4-dimethyl and 4alpha-methylsterols, ERG26 catalyzes the oxidative decarboxylation that results in a reduction of the 3-beta-hydroxy group at the C-3 carbon to an oxo group, and ERG27 is responsible for the reduction of the keto group on the C-3. ERG28 has a role as a scaffold to help anchor ERG25, ERG26 and ERG27 to the endoplasmic reticulum and ERG29 regulates the activity of the iron-containing C4-methylsterol oxidase ERG25. Then, the sterol 24-C-methyltransferase ERG6 catalyzes the methyl transfer from S-adenosyl-methionine to the C-24 of zymosterol to form fecosterol. The C-8 sterol isomerase ERG2 catalyzes the reaction which results in unsaturation at C-7 in the B ring of sterols and thus converts fecosterol to episterol. The sterol-C5-desaturase ERG3 then catalyzes the introduction of a C-5 double bond in the B ring to produce 5-dehydroepisterol. The C-22 sterol desaturase ERG5 further converts 5-dehydroepisterol into ergosta-5,7,22,24(28)-tetraen-3beta-ol by forming the C-22(23) double bond in the sterol side chain. Finally, ergosta-5,7,22,24(28)-tetraen-3beta-ol is substrate of the C-24(28) sterol reductase ERG4 to produce ergosterol. The sequence is that of Ergosterol biosynthetic protein 28 from Saccharomyces cerevisiae (strain ATCC 204508 / S288c) (Baker's yeast).